A 510-amino-acid chain; its full sequence is Archaeosine synthase subunit alpha (510 aa).

Positions 427–510 (LGKFTINKAS…LKKGIAVKVR (84 aa)) constitute a PUA domain.

This sequence belongs to the archaeosine synthase type 1 family. As to quaternary structure, forms a robust complex with the archaeosine synthase beta subunit RaSEA, likely an alpha(2)beta(2) heterotetrameric structure. Formation of this complex highly increases lysine transfer activity.

It carries out the reaction 7-cyano-7-carbaguanosine(15) in tRNA + L-lysine = 7-N-[(5S)-5-amino-5-carboxypentyl]formamidino-7-deazaguanosine(15) in tRNA. Its pathway is tRNA modification; archaeosine-tRNA biosynthesis. Functions in the biosynthesis of archaeosine, a modified nucleoside present in the dihydrouridine loop (D-loop) of archaeal tRNAs. Catalyzes the addition of L-lysine to the cyano group of 7-cyano-7-deazaguanine (preQ0)-modified tRNAs at position 15, to generate q0kN15-tRNA, a q0N lysine adduct identified as 7-N-[(5S)-5-amino-5-carboxypentyl]formamidino-7-deazaguanosine. The sequence is that of Archaeosine synthase subunit alpha from Thermoplasma acidophilum (strain ATCC 25905 / DSM 1728 / JCM 9062 / NBRC 15155 / AMRC-C165).